Reading from the N-terminus, the 180-residue chain is ATP-dependent protease subunit HslV (180 aa).

The active site involves Thr5. 3 residues coordinate Na(+): Gly165, Cys168, and Thr171.

This sequence belongs to the peptidase T1B family. HslV subfamily. A double ring-shaped homohexamer of HslV is capped on each side by a ring-shaped HslU homohexamer. The assembly of the HslU/HslV complex is dependent on binding of ATP.

The protein localises to the cytoplasm. It catalyses the reaction ATP-dependent cleavage of peptide bonds with broad specificity.. Allosterically activated by HslU binding. In terms of biological role, protease subunit of a proteasome-like degradation complex believed to be a general protein degrading machinery. In Helicobacter pylori (strain HPAG1), this protein is ATP-dependent protease subunit HslV.